The sequence spans 506 residues: Kynurenine 3-monooxygenase (506 aa).

The disordered stretch occupies residues 153–175 (QETSLLPGEESEKDKKQNTEDED). Over residues 162-171 (ESEKDKKQNT) the composition is skewed to basic and acidic residues.

The protein belongs to the aromatic-ring hydroxylase family. KMO subfamily. Requires FAD as cofactor.

Its subcellular location is the mitochondrion outer membrane. It catalyses the reaction L-kynurenine + NADPH + O2 + H(+) = 3-hydroxy-L-kynurenine + NADP(+) + H2O. The protein operates within cofactor biosynthesis; NAD(+) biosynthesis; quinolinate from L-kynurenine: step 1/3. In terms of biological role, catalyzes the hydroxylation of L-kynurenine (L-Kyn) to form 3-hydroxy-L-kynurenine (L-3OHKyn). Required for synthesis of quinolinic acid. This chain is Kynurenine 3-monooxygenase, found in Cryptococcus neoformans var. neoformans serotype D (strain B-3501A) (Filobasidiella neoformans).